We begin with the raw amino-acid sequence, 77 residues long: Conotoxin ArMKLT2-0322 (77 aa).

Residues 1-22 (MKLTCVLIIAVLFLIVCQLNTA) form the signal peptide. Residues 23–47 (DDSRDKQEYRAVRLRDAIRNSRGSR) constitute a propeptide that is removed on maturation. 3 cysteine pairs are disulfide-bonded: Cys49-Cys62, Cys56-Cys67, and Cys61-Cys74.

It belongs to the conotoxin O1 superfamily. As to expression, expressed by the venom duct.

Its subcellular location is the secreted. In Conus arenatus (Sand-dusted cone), this protein is Conotoxin ArMKLT2-0322.